The sequence spans 259 residues: Ribonuclease PH (259 aa).

Phosphate is bound by residues R88 and 126 to 128 (GTR).

Belongs to the RNase PH family. As to quaternary structure, homohexameric ring arranged as a trimer of dimers.

It catalyses the reaction tRNA(n+1) + phosphate = tRNA(n) + a ribonucleoside 5'-diphosphate. Its function is as follows. Phosphorolytic 3'-5' exoribonuclease that plays an important role in tRNA 3'-end maturation. Removes nucleotide residues following the 3'-CCA terminus of tRNAs; can also add nucleotides to the ends of RNA molecules by using nucleoside diphosphates as substrates, but this may not be physiologically important. Probably plays a role in initiation of 16S rRNA degradation (leading to ribosome degradation) during starvation. The sequence is that of Ribonuclease PH from Mycobacterium ulcerans (strain Agy99).